The sequence spans 151 residues: FAD synthase (151 aa).

Residues 12-13 (TF), 17-20 (HPGH), D97, and Y125 each bind ATP.

The protein belongs to the archaeal FAD synthase family. As to quaternary structure, homodimer. The cofactor is a divalent metal cation.

It catalyses the reaction FMN + ATP + H(+) = FAD + diphosphate. It functions in the pathway cofactor biosynthesis; FAD biosynthesis; FAD from FMN: step 1/1. In terms of biological role, catalyzes the transfer of the AMP portion of ATP to flavin mononucleotide (FMN) to produce flavin adenine dinucleotide (FAD) coenzyme. This Methanococcus vannielii (strain ATCC 35089 / DSM 1224 / JCM 13029 / OCM 148 / SB) protein is FAD synthase.